The chain runs to 241 residues: Eukaryotic translation initiation factor 3 subunit J (241 aa).

Residues 1-94 (MDVSWDADNF…EKTAEEMTPE (94 aa)) form a disordered region. Over residues 26–45 (GEDEDDNVKESWEDEEEEKK) the composition is skewed to acidic residues. The stretch at 61 to 118 (KKKIHDKIAERERQEREKAERLVTEKTAEEMTPEQKLAEKLRQQKLQEESDLRLAMET) forms a coiled coil. Basic and acidic residues predominate over residues 66–89 (DKIAERERQEREKAERLVTEKTAE).

The protein belongs to the eIF-3 subunit J family. In terms of assembly, component of the eukaryotic translation initiation factor 3 (eIF-3) complex.

It localises to the cytoplasm. Functionally, component of the eukaryotic translation initiation factor 3 (eIF-3) complex, which is involved in protein synthesis of a specialized repertoire of mRNAs and, together with other initiation factors, stimulates binding of mRNA and methionyl-tRNAi to the 40S ribosome. The eIF-3 complex specifically targets and initiates translation of a subset of mRNAs involved in cell proliferation. In Bombyx mori (Silk moth), this protein is Eukaryotic translation initiation factor 3 subunit J.